Reading from the N-terminus, the 124-residue chain is Small ribosomal subunit protein eS6 (124 aa).

This sequence belongs to the eukaryotic ribosomal protein eS6 family.

The polypeptide is Small ribosomal subunit protein eS6 (Methanococcus maripaludis (strain C7 / ATCC BAA-1331)).